The primary structure comprises 465 residues: Protein DML1 (465 aa).

Belongs to the misato family.

The protein localises to the mitochondrion. Its function is as follows. Involved in the partitioning of the mitochondrial organelle and mitochondrial DNA (mtDNA) inheritance. The chain is Protein DML1 (DML1) from Eremothecium gossypii (strain ATCC 10895 / CBS 109.51 / FGSC 9923 / NRRL Y-1056) (Yeast).